Consider the following 839-residue polypeptide: uncharacterized protein (839 aa).

Disordered stretches follow at residues 504–611, 627–646, and 682–839; these read TVSP…NVVN, KNNN…DNHC, and NHNY…SLGS. Over residues 509-611 the composition is skewed to low complexity; sequence GNNNVTGDVD…EGSNNCNVVN (103 aa). Positions 636–646 are enriched in basic and acidic residues; sequence NEYKNSNDNHC. Low complexity-rich tracts occupy residues 689–704 and 713–753; these read NGNN…NNNN and QQQP…NNNK. Residues 726–764 are a coiled coil; it reads QQSQQQPQLQQKKQQIQEEQQNLNNNNKSIEDDEEAFNS. Over residues 765 to 776 the composition is skewed to basic and acidic residues; that stretch reads DDEHDHEDDSIR. Residues 809-823 are compositionally biased toward acidic residues; that stretch reads EDNDDDSDISDSDSD.

This is an uncharacterized protein from Dictyostelium discoideum (Social amoeba).